A 72-amino-acid polypeptide reads, in one-letter code: Hypotensin (72 aa).

The N-terminal stretch at M1–G24 is a signal peptide. Propeptides lie at residues M25 to R35 and R61 to D72.

The protein belongs to the non-disulfide-bridged peptide (NDBP) superfamily. As to expression, expressed by the venom gland.

The protein localises to the secreted. Potentiates the hypotensive action of bradykinin (BK) in normotensive rats, and induces a vasorelaxant effect in mesenteric artery rings that is induced by endothelium-dependent release of nitric oxide (NO). Does not inhibit angiotensin converting enzyme (ACE). Shows neither hemolytic activity nor cytotoxicity to normal and cancer cells. Shows moderate antimicrobial activity against the fungi Candida albicans and the filamentous fungus Trichophyton rubrum, as well as against the bacteria C.albicans (MIC=128 ug/mL), C.tropicalis (MIC=128 ug/mL) and Aspergillus flavus (MIC=128 ug/mL). Has no antimicrobial activity against S.aureus, S.epidermidis and P.aeruginosa. This Tityus stigmurus (Brazilian scorpion) protein is Hypotensin.